Reading from the N-terminus, the 187-residue chain is MSTGNFDLNELKRRMQGATQALKHELGGLRTGRASASMVEPVQVEAYGSHMPLNQLATVSVPEPRLLSVQVWDRSMVKAVEKAIVDSNLGLSPATEGQVIRLRIPELNQERRKELVKVAHKYAEQARVAVRHVRRDGLDTLKKLEKNHEMSEDDQERLAGDVQKATDSVISEIDQLLAAKEKEILTV.

The protein belongs to the RRF family.

Its subcellular location is the cytoplasm. Its function is as follows. Responsible for the release of ribosomes from messenger RNA at the termination of protein biosynthesis. May increase the efficiency of translation by recycling ribosomes from one round of translation to another. In Bradyrhizobium sp. (strain ORS 278), this protein is Ribosome-recycling factor.